The primary structure comprises 573 residues: Urease subunit alpha 1 (573 aa).

Positions 136–573 constitute a Urease domain; the sequence is GGIDTHVHFI…LPLAQRYFLF (438 aa). Ni(2+) is bound by residues histidine 141, histidine 143, and lysine 224. Lysine 224 is subject to N6-carboxylysine. A substrate-binding site is contributed by histidine 226. Residues histidine 253 and histidine 279 each contribute to the Ni(2+) site. The active-site Proton donor is the histidine 327. Aspartate 367 provides a ligand contact to Ni(2+).

This sequence belongs to the metallo-dependent hydrolases superfamily. Urease alpha subunit family. In terms of assembly, may form a heterohexamer of 3 UreC (alpha) and 3 UreAB (gamma/beta) subunits. May also form a heterotrimer of UreA (gamma), UreB (beta) and UreC (alpha) subunits. Three heterotrimers associate to form the active enzyme. Ni cation serves as cofactor. In terms of processing, carboxylation allows a single lysine to coordinate two nickel ions.

The protein localises to the cytoplasm. It catalyses the reaction urea + 2 H2O + H(+) = hydrogencarbonate + 2 NH4(+). It functions in the pathway nitrogen metabolism; urea degradation; CO(2) and NH(3) from urea (urease route): step 1/1. The polypeptide is Urease subunit alpha 1 (Streptomyces coelicolor (strain ATCC BAA-471 / A3(2) / M145)).